The following is a 232-amino-acid chain: 7-cyano-7-deazaguanine synthase (232 aa).

ATP is bound at residue 8–18; that stretch reads FSGGQDSTTCL. The Zn(2+) site is built by Cys-187, Cys-196, Cys-199, and Cys-202.

The protein belongs to the QueC family. It depends on Zn(2+) as a cofactor.

It carries out the reaction 7-carboxy-7-deazaguanine + NH4(+) + ATP = 7-cyano-7-deazaguanine + ADP + phosphate + H2O + H(+). It participates in purine metabolism; 7-cyano-7-deazaguanine biosynthesis. In terms of biological role, catalyzes the ATP-dependent conversion of 7-carboxy-7-deazaguanine (CDG) to 7-cyano-7-deazaguanine (preQ(0)). In Vibrio parahaemolyticus serotype O3:K6 (strain RIMD 2210633), this protein is 7-cyano-7-deazaguanine synthase.